Consider the following 309-residue polypeptide: Glutaminase (309 aa).

Substrate contacts are provided by Ser64, Asn114, Glu160, Asn167, Tyr191, Tyr243, and Val261.

The protein belongs to the glutaminase family. In terms of assembly, homotetramer.

The catalysed reaction is L-glutamine + H2O = L-glutamate + NH4(+). This chain is Glutaminase, found in Rhodopseudomonas palustris (strain BisB18).